A 37-amino-acid chain; its full sequence is Dolichyl-diphosphooligosaccharide--protein glycosyltransferase subunit 4A (37 aa).

At 1-7 (MIDDQDL) the chain is on the lumenal side. Residues 8 to 28 (GFIANFLGIFIFALVIAYHYV) traverse the membrane as a helical segment. Topologically, residues 29-37 (TADPKYEAT) are cytoplasmic.

This sequence belongs to the OST4 family. In terms of assembly, component of the oligosaccharyltransferase (OST) complex.

The protein localises to the endoplasmic reticulum membrane. Its function is as follows. Subunit of the oligosaccharyl transferase (OST) complex that catalyzes the initial transfer of a defined glycan (Glc(3)Man(9)GlcNAc(2) in eukaryotes) from the lipid carrier dolichol-pyrophosphate to an asparagine residue within an Asn-X-Ser/Thr consensus motif in nascent polypeptide chains, the first step in protein N-glycosylation. N-glycosylation occurs cotranslationally and the complex associates with the Sec61 complex at the channel-forming translocon complex that mediates protein translocation across the endoplasmic reticulum (ER). All subunits are required for a maximal enzyme activity. This is Dolichyl-diphosphooligosaccharide--protein glycosyltransferase subunit 4A (OST4A) from Arabidopsis thaliana (Mouse-ear cress).